We begin with the raw amino-acid sequence, 1305 residues long: Contactin-associated protein like 5-3 (1305 aa).

The first 24 residues, methionine 1–threonine 24, serve as a signal peptide directing secretion. Residues alanine 25 to cysteine 174 form the F5/8 type C domain. Residues alanine 25 to aspartate 1235 are Extracellular-facing. Laminin G-like domains follow at residues valine 180–cysteine 360 and proline 367–cysteine 544. N-linked (GlcNAc...) asparagine glycosylation is present at asparagine 282. A disulfide bridge links cysteine 329 with cysteine 360. Asparagine 496 is a glycosylation site (N-linked (GlcNAc...) asparagine). Disulfide bonds link cysteine 512–cysteine 544, cysteine 550–cysteine 561, and cysteine 555–cysteine 570. The region spanning isoleucine 546–histidine 583 is the EGF-like 1 domain. The N-linked (GlcNAc...) asparagine glycan is linked to asparagine 571. A disulfide bridge connects residues cysteine 572 and cysteine 582. Residues aspartate 584–tryptophan 790 form the Fibrinogen C-terminal domain. One can recognise a Laminin G-like 3 domain in the interval asparagine 791–cysteine 956. 4 cysteine pairs are disulfide-bonded: cysteine 929–cysteine 956, cysteine 960–cysteine 973, cysteine 967–cysteine 982, and cysteine 984–cysteine 994. The EGF-like 2 domain maps to proline 957–glutamine 995. In terms of domain architecture, Laminin G-like 4 spans glutamine 1013 to cysteine 1198. N-linked (GlcNAc...) asparagine glycosylation is found at asparagine 1023 and asparagine 1057. A disulfide bond links cysteine 1163 and cysteine 1198. A helical membrane pass occupies residues leucine 1236–isoleucine 1256. At methionine 1257–isoleucine 1305 the chain is on the cytoplasmic side.

It belongs to the neurexin family. As to expression, expressed in brain.

The protein resides in the membrane. May play a role in the correct development and proper functioning of the peripheral and central nervous system and be involved in cell adhesion and intercellular communication. The sequence is that of Contactin-associated protein like 5-3 (Cntnap5c) from Mus musculus (Mouse).